The sequence spans 519 residues: Circadian clock oscillator protein KaiC (519 aa).

KaiC domains are found at residues 1-246 (MSEK…VNIF) and 260-519 (VRVS…GSDS). ATP-binding residues include G48, T49, G50, K51, T52, L53, K223, L224, R225, T227, H229, T239, T289, G290, T291, G292, K293, T294, and L295. T52 is a binding site for Mg(2+). Residue T294 coordinates Mg(2+). A Mg(2+)-binding site is contributed by E317. W330 lines the ATP pocket. Residue S430 is modified to Phosphoserine; by autocatalysis. The residue at position 431 (T431) is a Phosphothreonine; by autocatalysis. The ATP site is built by R450, K456, M457, R458, S460, H462, and K464.

This sequence belongs to the KaiC family. Homohexamer; hexamerization is dependent on ATP-binding. The KaiABC complex composition changes during the circadian cycle to control KaiC phosphorylation. Complexes KaiC(6), KaiA(2-4):KaiC(6), KaiB(6):KaiC(6) and KaiC(6):KaiB(6):KaiA(12) are among the most important forms, many form cooperatively. KaiC interacts with SasA, activating its autokinase function and leading to RpaA activation. The cofactor is Mg(2+). In terms of processing, phosphorylated on serine and threonine residues by autocatalysis. Has a 4 step phosphorylation cycle; the autokinase acts first on Thr-431, then Ser-430. When Ser-430 is modified KaiC switches to an autophosphatase mode, acting first on phospho-Thr-431 then phospho-Ser-430.

It catalyses the reaction L-seryl-[protein] + ATP = O-phospho-L-seryl-[protein] + ADP + H(+). The enzyme catalyses L-threonyl-[protein] + ATP = O-phospho-L-threonyl-[protein] + ADP + H(+). It carries out the reaction ATP + H2O = ADP + phosphate + H(+). Its activity is regulated as follows. The interaction with KaiA enhances its phosphorylation status, while the interaction with KaiB decreases it. In terms of biological role, central component of the KaiABC oscillator complex, which constitutes the main circadian regulator in cyanobacteria. Complex composition changes during the circadian cycle to control KaiC phosphorylation. KaiA stimulates KaiC autophosphorylation, while KaiB sequesters KaiA, leading to KaiC autodephosphorylation. Clock output pathways impact the RpaA transcriptional regulator. KaiC enhances the autophosphorylation activity of SasA, which then transfers its phosphate group to RpaA to activate it. KaiB and KaiC together enhance the phospho-RpaA dephosphatase activity of CikA. Functionally, has a weak, temperature-independent ATPase activity; ATPase activity defines the circadian period. The phosphorylation state of KaiC modulates its ATPase activity and effects KaiB binding. The sequence is that of Circadian clock oscillator protein KaiC from Nostoc sp. (strain PCC 7120 / SAG 25.82 / UTEX 2576).